Consider the following 469-residue polypeptide: Protein nucleotidyltransferase YdiU (469 aa).

Positions 80, 82, 83, 103, 115, 116, 166, and 173 each coordinate ATP. The active-site Proton acceptor is the Asp-243. Residues Asn-244 and Asp-253 each coordinate Mg(2+). Asp-253 is a binding site for ATP.

Belongs to the SELO family. Mg(2+) is required as a cofactor. The cofactor is Mn(2+).

It carries out the reaction L-seryl-[protein] + ATP = 3-O-(5'-adenylyl)-L-seryl-[protein] + diphosphate. The catalysed reaction is L-threonyl-[protein] + ATP = 3-O-(5'-adenylyl)-L-threonyl-[protein] + diphosphate. It catalyses the reaction L-tyrosyl-[protein] + ATP = O-(5'-adenylyl)-L-tyrosyl-[protein] + diphosphate. The enzyme catalyses L-histidyl-[protein] + UTP = N(tele)-(5'-uridylyl)-L-histidyl-[protein] + diphosphate. It carries out the reaction L-seryl-[protein] + UTP = O-(5'-uridylyl)-L-seryl-[protein] + diphosphate. The catalysed reaction is L-tyrosyl-[protein] + UTP = O-(5'-uridylyl)-L-tyrosyl-[protein] + diphosphate. Nucleotidyltransferase involved in the post-translational modification of proteins. It can catalyze the addition of adenosine monophosphate (AMP) or uridine monophosphate (UMP) to a protein, resulting in modifications known as AMPylation and UMPylation. The polypeptide is Protein nucleotidyltransferase YdiU (Pseudoalteromonas translucida (strain TAC 125)).